A 482-amino-acid chain; its full sequence is ATP synthase subunit beta (482 aa).

Position 162-169 (162-169 (GGAGVGKT)) interacts with ATP.

It belongs to the ATPase alpha/beta chains family. In terms of assembly, F-type ATPases have 2 components, CF(1) - the catalytic core - and CF(0) - the membrane proton channel. CF(1) has five subunits: alpha(3), beta(3), gamma(1), delta(1), epsilon(1). CF(0) has four main subunits: a(1), b(1), b'(1) and c(9-12).

The protein resides in the cellular thylakoid membrane. The catalysed reaction is ATP + H2O + 4 H(+)(in) = ADP + phosphate + 5 H(+)(out). Produces ATP from ADP in the presence of a proton gradient across the membrane. The catalytic sites are hosted primarily by the beta subunits. In Nostoc sp. (strain PCC 7120 / SAG 25.82 / UTEX 2576), this protein is ATP synthase subunit beta.